Consider the following 293-residue polypeptide: uncharacterized protein (293 aa).

Positions 1–22 (MTFNEGVQIDTSTTSTSGSGGG) are disordered. A helical membrane pass occupies residues 25–45 (LAIGGGLGGLLVVVVAMLLGV). Residues 243–265 (GDDRIQQQTTGRTNPETWTHGSA) are disordered. Polar residues predominate over residues 248–265 (QQQTTGRTNPETWTHGSA).

Its subcellular location is the membrane. This is an uncharacterized protein from Mycobacterium tuberculosis (strain CDC 1551 / Oshkosh).